We begin with the raw amino-acid sequence, 272 residues long: MSFEEEEEEETFEHTLLVVREVSVYKIPPRTTSGGYKCGEWLQSDKIWSGRLRVVSCKDRCEIRLEDSNSGDLFAACFVDPGRRENSVEPSLDSSRYFVLRIDDGRGKYAFIGLGFAERNEAFDFNVALSDHEKYVRREKEKETGETSESDNHIDIHPAVNHRLKEGETIRINVKPKPTTNGTGMLSAALSGTGKPKPLALAPPPKAAGVTRSPLPPPPNDPVASRIASDGCKESRRNEPLSDLSQLKKNLPSTAGSGSSKSTGAASGWAAF.

2 stretches are compositionally biased toward basic and acidic residues: residues 136-156 (VRRE…HIDI) and 231-240 (GCKESRRNEP). Disordered stretches follow at residues 136 to 157 (VRRE…IDIH) and 174 to 272 (VKPK…WAAF). Over residues 243–252 (DLSQLKKNLP) the composition is skewed to polar residues. A compositionally biased stretch (low complexity) spans 253–272 (STAGSGSSKSTGAASGWAAF).

This is an uncharacterized protein from Arabidopsis thaliana (Mouse-ear cress).